The chain runs to 473 residues: Photosystem II CP43 reaction center protein (473 aa).

A propeptide spanning residues 1–14 is cleaved from the precursor; that stretch reads MKILYSPRRFYPVE. T15 is subject to N-acetylthreonine. Phosphothreonine is present on T15. 5 consecutive transmembrane segments (helical) span residues 69–93, 134–155, 178–200, 255–275, and 291–312; these read LFEVAHFVPEKPMYEQGLILLPHLA, IIGPETLEESFPFFGYAWKDKN, KALYFGGVYDTWAPGGGDVRKIT, KPFAWARRAFVWSGEAYLSYS, and WFNNTAYPSEFYGPTGPEASQA. [CaMn4O5] cluster is bound at residue E367. The chain crosses the membrane as a helical span at residues 447 to 471; the sequence is RARAAAAGFEKGIDRDFEPVLSTTP.

The protein belongs to the PsbB/PsbC family. PsbC subfamily. PSII is composed of 1 copy each of membrane proteins PsbA, PsbB, PsbC, PsbD, PsbE, PsbF, PsbH, PsbI, PsbJ, PsbK, PsbL, PsbM, PsbT, PsbX, PsbY, PsbZ, Psb30/Ycf12, at least 3 peripheral proteins of the oxygen-evolving complex and a large number of cofactors. It forms dimeric complexes. Requires Binds multiple chlorophylls and provides some of the ligands for the Ca-4Mn-5O cluster of the oxygen-evolving complex. It may also provide a ligand for a Cl- that is required for oxygen evolution. PSII binds additional chlorophylls, carotenoids and specific lipids. as cofactor.

It localises to the plastid. The protein resides in the chloroplast thylakoid membrane. Functionally, one of the components of the core complex of photosystem II (PSII). It binds chlorophyll and helps catalyze the primary light-induced photochemical processes of PSII. PSII is a light-driven water:plastoquinone oxidoreductase, using light energy to abstract electrons from H(2)O, generating O(2) and a proton gradient subsequently used for ATP formation. The sequence is that of Photosystem II CP43 reaction center protein from Huperzia lucidula (Shining clubmoss).